We begin with the raw amino-acid sequence, 268 residues long: Undecaprenyl-diphosphatase (268 aa).

The next 7 membrane-spanning stretches (helical) occupy residues Ser5–Ser25, Gly43–Phe63, Phe84–Ile104, Ala106–Leu126, Ala184–Leu204, Phe213–Val233, and Pro248–Gly268.

Belongs to the UppP family.

The protein resides in the cell inner membrane. The catalysed reaction is di-trans,octa-cis-undecaprenyl diphosphate + H2O = di-trans,octa-cis-undecaprenyl phosphate + phosphate + H(+). Functionally, catalyzes the dephosphorylation of undecaprenyl diphosphate (UPP). Confers resistance to bacitracin. The polypeptide is Undecaprenyl-diphosphatase (Sinorhizobium fredii (strain NBRC 101917 / NGR234)).